The chain runs to 437 residues: ATP-dependent protease ATPase subunit HslU (437 aa).

Residues valine 18, 60–65 (GCGKTE), aspartate 250, glutamate 315, and arginine 387 contribute to the ATP site.

It belongs to the ClpX chaperone family. HslU subfamily. As to quaternary structure, a double ring-shaped homohexamer of HslV is capped on each side by a ring-shaped HslU homohexamer. The assembly of the HslU/HslV complex is dependent on binding of ATP.

The protein resides in the cytoplasm. Functionally, ATPase subunit of a proteasome-like degradation complex; this subunit has chaperone activity. The binding of ATP and its subsequent hydrolysis by HslU are essential for unfolding of protein substrates subsequently hydrolyzed by HslV. HslU recognizes the N-terminal part of its protein substrates and unfolds these before they are guided to HslV for hydrolysis. The polypeptide is ATP-dependent protease ATPase subunit HslU (Methylobacterium nodulans (strain LMG 21967 / CNCM I-2342 / ORS 2060)).